The primary structure comprises 276 residues: NAD-capped RNA hydrolase NudC (276 aa).

Arginine 82 serves as a coordination point for substrate. Positions 112 and 115 each coordinate Zn(2+). Glutamate 125 serves as a coordination point for substrate. Zn(2+) is bound by residues cysteine 130 and cysteine 133. A substrate-binding site is contributed by tyrosine 138. The Nudix hydrolase domain maps to 139–262; the sequence is PRISPSMIVL…SIARYLIDLY (124 aa). Residues alanine 172, glutamate 188, and glutamate 192 each coordinate a divalent metal cation. The short motif at 173 to 194 is the Nudix box element; that stretch reads GFAEPGESAEDCLVREVREEVA. A substrate-binding site is contributed by 206 to 213; sequence QCWPFPHS. Residue glutamate 233 coordinates a divalent metal cation. Position 255 (alanine 255) interacts with substrate.

Belongs to the Nudix hydrolase family. NudC subfamily. In terms of assembly, homodimer. Mg(2+) serves as cofactor. The cofactor is Mn(2+). Requires Zn(2+) as cofactor.

The enzyme catalyses a 5'-end NAD(+)-phospho-ribonucleoside in mRNA + H2O = a 5'-end phospho-adenosine-phospho-ribonucleoside in mRNA + beta-nicotinamide D-ribonucleotide + 2 H(+). It catalyses the reaction NAD(+) + H2O = beta-nicotinamide D-ribonucleotide + AMP + 2 H(+). The catalysed reaction is NADH + H2O = reduced beta-nicotinamide D-ribonucleotide + AMP + 2 H(+). Its function is as follows. mRNA decapping enzyme that specifically removes the nicotinamide adenine dinucleotide (NAD) cap from a subset of mRNAs by hydrolyzing the diphosphate linkage to produce nicotinamide mononucleotide (NMN) and 5' monophosphate mRNA. The NAD-cap is present at the 5'-end of some mRNAs and stabilizes RNA against 5'-processing. Has preference for mRNAs with a 5'-end purine. Catalyzes the hydrolysis of a broad range of dinucleotide pyrophosphates. The protein is NAD-capped RNA hydrolase NudC of Pseudomonas putida (strain W619).